A 273-amino-acid chain; its full sequence is ComE operon protein 4 (273 aa).

This sequence belongs to the pyrroline-5-carboxylate reductase family.

Its function is as follows. Dispensable for transformability. Not known if it can act as a pyrroline-5-carboxylate reductase. The sequence is that of ComE operon protein 4 (comER) from Bacillus subtilis (strain 168).